Reading from the N-terminus, the 149-residue chain is Arginine repressor (149 aa).

This sequence belongs to the ArgR family.

The protein resides in the cytoplasm. It participates in amino-acid biosynthesis; L-arginine biosynthesis [regulation]. Functionally, regulates arginine biosynthesis genes. The sequence is that of Arginine repressor from Chlorobaculum parvum (strain DSM 263 / NCIMB 8327) (Chlorobium vibrioforme subsp. thiosulfatophilum).